We begin with the raw amino-acid sequence, 546 residues long: CTP synthase (546 aa).

The tract at residues 1–266 (MTTNYIFVTG…DDLVCQRFGI (266 aa)) is amidoligase domain. Serine 14 serves as a coordination point for CTP. Position 14 (serine 14) interacts with UTP. Residues 15–20 (SLGKGI) and aspartate 72 contribute to the ATP site. Mg(2+) is bound by residues aspartate 72 and glutamate 140. Residues 147–149 (DIE), 187–192 (KTKPTQ), and lysine 223 contribute to the CTP site. UTP contacts are provided by residues 187–192 (KTKPTQ) and lysine 223. Residue 239–241 (KDV) coordinates ATP. In terms of domain architecture, Glutamine amidotransferase type-1 spans 291–542 (VIGMVGKYIE…VKAAGESVRG (252 aa)). Glycine 352 contacts L-glutamine. Catalysis depends on cysteine 379, which acts as the Nucleophile; for glutamine hydrolysis. L-glutamine is bound by residues 380–383 (LGMQ), glutamate 403, and arginine 470. Catalysis depends on residues histidine 515 and glutamate 517.

It belongs to the CTP synthase family. In terms of assembly, homotetramer.

The enzyme catalyses UTP + L-glutamine + ATP + H2O = CTP + L-glutamate + ADP + phosphate + 2 H(+). It catalyses the reaction L-glutamine + H2O = L-glutamate + NH4(+). It carries out the reaction UTP + NH4(+) + ATP = CTP + ADP + phosphate + 2 H(+). It functions in the pathway pyrimidine metabolism; CTP biosynthesis via de novo pathway; CTP from UDP: step 2/2. Allosterically activated by GTP, when glutamine is the substrate; GTP has no effect on the reaction when ammonia is the substrate. The allosteric effector GTP functions by stabilizing the protein conformation that binds the tetrahedral intermediate(s) formed during glutamine hydrolysis. Inhibited by the product CTP, via allosteric rather than competitive inhibition. Catalyzes the ATP-dependent amination of UTP to CTP with either L-glutamine or ammonia as the source of nitrogen. Regulates intracellular CTP levels through interactions with the four ribonucleotide triphosphates. This Aliivibrio fischeri (strain MJ11) (Vibrio fischeri) protein is CTP synthase.